The primary structure comprises 159 residues: Large ribosomal subunit protein uL23m (159 aa).

Belongs to the universal ribosomal protein uL23 family. As to quaternary structure, component of the mitochondrial ribosome large subunit (39S) which comprises a 16S rRNA and about 50 distinct proteins.

The protein localises to the mitochondrion. The chain is Large ribosomal subunit protein uL23m (mrpl-23) from Caenorhabditis briggsae.